Reading from the N-terminus, the 235-residue chain is Large ribosomal subunit protein bL25 (235 aa).

Disordered stretches follow at residues 1 to 21 (MADN…PARR) and 210 to 235 (APAA…GAKK). Residues 210 to 222 (APAAGAAPAAGGE) show a composition bias toward low complexity. Positions 223 to 235 (AAKKAPEAKGAKK) are enriched in basic and acidic residues.

This sequence belongs to the bacterial ribosomal protein bL25 family. CTC subfamily. In terms of assembly, part of the 50S ribosomal subunit; part of the 5S rRNA/L5/L18/L25 subcomplex. Contacts the 5S rRNA. Binds to the 5S rRNA independently of L5 and L18.

Functionally, this is one of the proteins that binds to the 5S RNA in the ribosome where it forms part of the central protuberance. The chain is Large ribosomal subunit protein bL25 from Anaeromyxobacter sp. (strain Fw109-5).